A 341-amino-acid chain; its full sequence is Pyrophosphate--fructose 6-phosphate 1-phosphotransferase (341 aa).

Gly-10 is a binding site for diphosphate. Glu-103 is a binding site for Mg(2+). Substrate is bound by residues 125–127 (TID), Arg-162, 169–171 (MGR), Glu-221, Arg-265, and 271–274 (HTQR). The Proton acceptor role is filled by Asp-127.

The protein belongs to the phosphofructokinase type A (PFKA) family. Mixed-substrate PFK group III subfamily. In terms of assembly, homotetramer. The cofactor is Mg(2+).

Its subcellular location is the cytoplasm. It carries out the reaction beta-D-fructose 6-phosphate + diphosphate = beta-D-fructose 1,6-bisphosphate + phosphate + H(+). It functions in the pathway carbohydrate degradation; glycolysis; D-glyceraldehyde 3-phosphate and glycerone phosphate from D-glucose: step 3/4. With respect to regulation, non-allosteric. Functionally, catalyzes the phosphorylation of D-fructose 6-phosphate, the first committing step of glycolysis. Uses inorganic phosphate (PPi) as phosphoryl donor instead of ATP like common ATP-dependent phosphofructokinases (ATP-PFKs), which renders the reaction reversible, and can thus function both in glycolysis and gluconeogenesis. Consistently, PPi-PFK can replace the enzymes of both the forward (ATP-PFK) and reverse (fructose-bisphosphatase (FBPase)) reactions. The protein is Pyrophosphate--fructose 6-phosphate 1-phosphotransferase of Amycolatopsis methanolica.